A 57-amino-acid polypeptide reads, in one-letter code: Large ribosomal subunit protein bL32 (57 aa).

A compositionally biased stretch (basic residues) spans 1 to 20; sequence MAVPKKKTSKAKRDQRRATW. Positions 1 to 24 are disordered; that stretch reads MAVPKKKTSKAKRDQRRATWRRQA.

This sequence belongs to the bacterial ribosomal protein bL32 family.

The sequence is that of Large ribosomal subunit protein bL32 from Gloeothece citriformis (strain PCC 7424) (Cyanothece sp. (strain PCC 7424)).